A 429-amino-acid chain; its full sequence is Probable M18 family aminopeptidase 2 (429 aa).

3 residues coordinate Zn(2+): H82, H156, and H401.

The protein belongs to the peptidase M18 family. Zn(2+) serves as cofactor.

This Pseudomonas entomophila (strain L48) protein is Probable M18 family aminopeptidase 2.